Consider the following 491-residue polypeptide: Glycogen synthase (491 aa).

Residue lysine 15 participates in ADP-alpha-D-glucose binding.

It belongs to the glycosyltransferase 1 family. Bacterial/plant glycogen synthase subfamily.

It carries out the reaction [(1-&gt;4)-alpha-D-glucosyl](n) + ADP-alpha-D-glucose = [(1-&gt;4)-alpha-D-glucosyl](n+1) + ADP + H(+). The protein operates within glycan biosynthesis; glycogen biosynthesis. In terms of biological role, synthesizes alpha-1,4-glucan chains using ADP-glucose. This Hydrogenovibrio crunogenus (strain DSM 25203 / XCL-2) (Thiomicrospira crunogena) protein is Glycogen synthase.